The sequence spans 168 residues: NAD(P)H-quinone oxidoreductase subunit J, chloroplastic (168 aa).

It belongs to the complex I 30 kDa subunit family. NDH is composed of at least 16 different subunits, 5 of which are encoded in the nucleus.

It is found in the plastid. Its subcellular location is the chloroplast thylakoid membrane. The enzyme catalyses a plastoquinone + NADH + (n+1) H(+)(in) = a plastoquinol + NAD(+) + n H(+)(out). It carries out the reaction a plastoquinone + NADPH + (n+1) H(+)(in) = a plastoquinol + NADP(+) + n H(+)(out). In terms of biological role, NDH shuttles electrons from NAD(P)H:plastoquinone, via FMN and iron-sulfur (Fe-S) centers, to quinones in the photosynthetic chain and possibly in a chloroplast respiratory chain. The immediate electron acceptor for the enzyme in this species is believed to be plastoquinone. Couples the redox reaction to proton translocation, and thus conserves the redox energy in a proton gradient. The chain is NAD(P)H-quinone oxidoreductase subunit J, chloroplastic from Chaetosphaeridium globosum (Charophycean green alga).